The primary structure comprises 857 residues: Leucine-rich repeat extensin-like protein 5 (857 aa).

The first 31 residues, 1–31 (MKTKMMMKNTSLIFVLLFITFFFTSISYSLS), serve as a signal peptide directing secretion. The stretch at 32–53 (LTFNGDLSDNEVRLITQRQLLY) is one LRR 1 repeat. Asparagine 98 is a glycosylation site (N-linked (GlcNAc...) asparagine). 10 LRR repeats span residues 125–149 (IRTVAGIDLNHADIAGYLPQELGLL), 150–172 (TDLALFHINSNRFCGTVPHRFNR), 174–197 (KLLFELDLSNNRFAGIFPTVVLQL), 198–221 (PSLKFLDLRFNEFEGPVPRELFSK), 223–244 (LDAIFINHNRFRFELPDNLGDS), 246–267 (VSVIVVANNHFHGCIPTSLGDM), 268–291 (RNLEEIIFMENGFNSCLPSQIGRL), 292–315 (KNVTVFDFSFNELVGSLPASIGGM), 316–339 (VSMEQLNVAHNRFSGKIPATICQL), and 341–362 (RLENFTFSYNFFTGEPPVCLGL). N-linked (GlcNAc...) asparagine glycosylation occurs at asparagine 293. Asparagine 344 carries N-linked (GlcNAc...) asparagine glycosylation. Disordered stretches follow at residues 406–776 (PPVV…EYSP) and 817–839 (YSPPPPPVIHHSQPPPPPIYEGP). Pro residues-rich tracts occupy residues 408–571 (VVVP…PTPI) and 579–768 (PIIP…PQSH). Residues 615-857 (SPPPSTPTPV…YASPPPPPFY (243 aa)) are contains the Ser-Pro(4) repeats.

Hydroxylated on proline residues in the S-P-P-P-P repeat. In terms of processing, O-glycosylated on hydroxyprolines. In terms of tissue distribution, expressed in roots, leaves and flowers.

Its subcellular location is the secreted. The protein localises to the cell wall. In terms of biological role, modulates cell morphogenesis by regulating cell wall formation and assembly, and/or growth polarization. This chain is Leucine-rich repeat extensin-like protein 5 (LRX5), found in Arabidopsis thaliana (Mouse-ear cress).